Reading from the N-terminus, the 137-residue chain is Large ribosomal subunit protein uL16 (137 aa).

Belongs to the universal ribosomal protein uL16 family. Part of the 50S ribosomal subunit.

Its function is as follows. Binds 23S rRNA and is also seen to make contacts with the A and possibly P site tRNAs. The protein is Large ribosomal subunit protein uL16 of Afipia carboxidovorans (strain ATCC 49405 / DSM 1227 / KCTC 32145 / OM5) (Oligotropha carboxidovorans).